The following is a 222-amino-acid chain: Cytidylate kinase (222 aa).

Position 10-18 (10-18) interacts with ATP; it reads GPSASGKGT.

The protein belongs to the cytidylate kinase family. Type 1 subfamily.

It localises to the cytoplasm. It catalyses the reaction CMP + ATP = CDP + ADP. It carries out the reaction dCMP + ATP = dCDP + ADP. In Chromobacterium violaceum (strain ATCC 12472 / DSM 30191 / JCM 1249 / CCUG 213 / NBRC 12614 / NCIMB 9131 / NCTC 9757 / MK), this protein is Cytidylate kinase.